A 563-amino-acid polypeptide reads, in one-letter code: MDTKHLIASEIQKVVPDMEQSTILSLLETPKNSSMGDLAFPAFSLAKTLRKAPQIIASDIAEQIKSDQFEKVEAVGPYVNFFLDKAAISSQVLKQVLSDGSAYATQNIGEGRNVAIDMSSPNIAKPFSIGHLRSTVIGDSLANIFDKIGYHPVKINHLGDWGKQFGMLIVAYKKWGNEEAVRAHPIDELLKLYVRINAEAETDPSVDEEAREWFRKLEANDPEATELWQWFRDESLLEFNRLYDKMNVTFDSYNGEAFYNDKMEEVLELLESKNLLVESKGAQVVNLEKYGIEHPALIKKSDGATLYITRDLAAALYRRRTYDFAKSIYVVGNEQSAHFKQLKAVLKEMDYDWSDDMTHVPFGLVTKGGAKLSTRKGNVILLEPTVAEAINRAASQIEAKNPNLADKDKVAQAVGVGAIKFYDLKTDRTNGYDFDLEAMVSFEGETGPYVQYAHARIQSILRKANFNPSNSDNYSLNDVESWEIIKLIQDFPRIIVRAADNFEPSIIAKFAINLAQCFNKYYAHTRILDEDAEISSRLALCYATATVLKESLRLLGVDAPNEM.

The 'HIGH' region signature appears at 121–131; it reads PNIAKPFSIGH.

It belongs to the class-I aminoacyl-tRNA synthetase family. As to quaternary structure, monomer.

It localises to the cytoplasm. The catalysed reaction is tRNA(Arg) + L-arginine + ATP = L-arginyl-tRNA(Arg) + AMP + diphosphate. The chain is Arginine--tRNA ligase from Streptococcus agalactiae serotype Ia (strain ATCC 27591 / A909 / CDC SS700).